The chain runs to 241 residues: DnaA regulatory inactivator Hda (241 aa).

This sequence belongs to the DnaA family. HdA subfamily. As to quaternary structure, the active form seems to be an ADP-bound monomer. Forms the RIDA complex (regulatory inactivation of DnaA) of ATP-DnaA, ADP-Hda and the DNA-loaded beta sliding clamp (dnaN).

Mediates the interaction of DNA replication initiator protein DnaA with DNA polymerase subunit beta sliding clamp (dnaN). Stimulates hydrolysis of ATP-DnaA to ADP-DnaA, rendering DnaA inactive for reinitiation, a process called regulatory inhibition of DnaA or RIDA. The sequence is that of DnaA regulatory inactivator Hda from Citrobacter koseri (strain ATCC BAA-895 / CDC 4225-83 / SGSC4696).